A 306-amino-acid chain; its full sequence is Glutaminase (306 aa).

Residues Ser-66, Asn-116, Glu-159, Asn-166, Tyr-190, Tyr-242, and Val-260 each coordinate substrate.

It belongs to the glutaminase family. As to quaternary structure, homotetramer.

It catalyses the reaction L-glutamine + H2O = L-glutamate + NH4(+). The sequence is that of Glutaminase from Caulobacter vibrioides (strain ATCC 19089 / CIP 103742 / CB 15) (Caulobacter crescentus).